A 484-amino-acid chain; its full sequence is T-complex protein 1 subunit delta (484 aa).

The protein belongs to the TCP-1 chaperonin family. As to quaternary structure, component of the T-complex protein 1 (TCP1) complex.

Its subcellular location is the cytoplasm. Its function is as follows. Molecular chaperone; assists the folding of proteins upon ATP hydrolysis. This is T-complex protein 1 subunit delta (CCT4) from Encephalitozoon cuniculi (strain GB-M1) (Microsporidian parasite).